The following is a 62-amino-acid chain: Beta-defensin 110 (62 aa).

The first 21 residues, 1–21 (MKIHLFFFILLFWVTILPARS), serve as a signal peptide directing secretion. Intrachain disulfides connect Cys-32–Cys-60, Cys-39–Cys-53, and Cys-43–Cys-61.

This sequence belongs to the beta-defensin family.

Its subcellular location is the secreted. In terms of biological role, has antibacterial activity. The protein is Beta-defensin 110 (DEFB110) of Canis lupus familiaris (Dog).